We begin with the raw amino-acid sequence, 30 residues long: Non-toxic phospholipase A2 (30 aa).

Residues Tyr-26, Gly-28, and Gly-30 each coordinate Ca(2+).

This sequence belongs to the phospholipase A2 family. Group I subfamily. As to quaternary structure, homodimer. Requires Ca(2+) as cofactor. Glycosylated. Expressed by the venom gland.

It is found in the secreted. The catalysed reaction is a 1,2-diacyl-sn-glycero-3-phosphocholine + H2O = a 1-acyl-sn-glycero-3-phosphocholine + a fatty acid + H(+). Its activity is regulated as follows. Enzymatic activity is diminished by Cd(2+) and Hg(2+). Functionally, relatively highly potent phospholipase A2 that displays potent antimicrobial and hemolytic activities. It does not show cytotoxic effects on the three human cell lines tested. PLA2 catalyzes the calcium-dependent hydrolysis of the 2-acyl groups in 3-sn-phosphoglycerides. It shows similar potencies on both Gram-negative and Gram-positive bacteria: B.cereus (MIC&gt;9 ug/ml), B.subtilis (MIC&gt;12 ug/ml), E.faecalis (MIC&gt;7 ug/ml), S.epidermidis (MIC&gt;12 ug/ml), S.aureux (MIC&gt;5 ug/ml), E.coli (MIC&gt;7 ug/ml), K.pneumonia (MIC&gt;8 ug/ml), P.aeruginosa (MIC&gt;10 ug/ml), and S.enteric (MIC&gt;9 ug/ml). It also shows antifungal activities: A.niger (MIC&gt;15 ug/ml), B.cinerea (MIC&gt;12 ug/ml), F.solani (MIC&gt;15 ug/ml), and P.digitatum (MIC&gt;10 ug/ml). This Walterinnesia aegyptia (Desert black snake) protein is Non-toxic phospholipase A2.